Here is a 286-residue protein sequence, read N- to C-terminus: Fructose-bisphosphate aldolase (286 aa).

Residue Ser-50 coordinates D-glyceraldehyde 3-phosphate. The active-site Proton donor is the Asp-85. Residues His-86, Asp-107, Glu-137, and His-181 each coordinate Zn(2+). Gly-182 is a binding site for dihydroxyacetone phosphate. His-209 is a Zn(2+) binding site. Dihydroxyacetone phosphate contacts are provided by residues 210–212 (GGT) and 231–234 (NVNT).

This sequence belongs to the class II fructose-bisphosphate aldolase family. The cofactor is Zn(2+).

It carries out the reaction beta-D-fructose 1,6-bisphosphate = D-glyceraldehyde 3-phosphate + dihydroxyacetone phosphate. It functions in the pathway carbohydrate degradation; glycolysis; D-glyceraldehyde 3-phosphate and glycerone phosphate from D-glucose: step 4/4. Catalyzes the aldol condensation of dihydroxyacetone phosphate (DHAP or glycerone-phosphate) with glyceraldehyde 3-phosphate (G3P) to form fructose 1,6-bisphosphate (FBP) in gluconeogenesis and the reverse reaction in glycolysis. This Staphylococcus aureus (strain MSSA476) protein is Fructose-bisphosphate aldolase (fba).